The primary structure comprises 129 residues: Small ribosomal subunit protein uS11 (129 aa).

The protein belongs to the universal ribosomal protein uS11 family. In terms of assembly, part of the 30S ribosomal subunit. Interacts with proteins S7 and S18. Binds to IF-3.

Functionally, located on the platform of the 30S subunit, it bridges several disparate RNA helices of the 16S rRNA. Forms part of the Shine-Dalgarno cleft in the 70S ribosome. The chain is Small ribosomal subunit protein uS11 from Geobacillus kaustophilus (strain HTA426).